The following is a 156-amino-acid chain: uncharacterized protein (156 aa).

The segment covering 1 to 12 (MSSRFARSNGNP) has biased composition (polar residues). The tract at residues 1–27 (MSSRFARSNGNPNHIRKRNHSPDPIGI) is disordered. Phosphoserine is present on Ser-21.

It localises to the cytoplasm. The protein localises to the nucleus. This is an uncharacterized protein from Saccharomyces cerevisiae (strain ATCC 204508 / S288c) (Baker's yeast).